The chain runs to 1939 residues: MSSDSEMAIFGEAAPFLRKSERERIEAQNKPFDAKTSVFVVDPKESFVKATVQSREGGKVTAKTEAGATVTVKDDQVFPMNPPKYDKIEDMAMMTHLHEPAVLYNLKERYAAWMIYTYSGLFCVTVNPYKWLPVYNAEVVTAYRGKKRQEAPPHIFSISDNAYQFMLTDRENQSILITGESGAGKTVNTKRVIQYFATIAVTGEKKKEEVTSGKMQGTLEDQIISANPLLEAFGNAKTVRNDNSSRFGKFIRIHFGTTGKLASADIETYLLEKSRVTFQLKAERSYHIFYQIMSNKKPDLIEMLLITTNPYDYAFVSQGEITVPSIDDQEELMATDSAIEILGFTSDERVSIYKLTGAVMHYGNMKFKQKQREEQAEPDGTEVADKAAYLQNLNSADLLKALCYPRVKVGNEYVTKGQTVQQVYNAVGALAKAVYDKMFLWMVTRINQQLDTKQPRQYFIGVLDIAGFEIFDFNSLEQLCINFTNEKLQQFFNHHMFVLEQEEYKKEGIEWTFIDFGMDLAACIELIEKPMGIFSILEEECMFPKATDTSFKNKLYEQHLGKSNNFQKPKPAKGKPEAHFSLIHYAGTVDYNIAGWLDKNKDPLNETVVGLYQKSAMKTLALLFVGATGAEAEAGGGKKGGKKKGSSFQTVSALFRENLNKLMTNLRSTHPHFVRCIIPNETKTPGAMEHELVLHQLRCNGVLEGIRICRKGFPSRILYADFKQRYKVLNASAIPEGQFIDSKKASEKLLGSIDIDHTQYKFGHTKVFFKAGLLGLLEEMRDEKLAQLITRTQAMCRGFLARVEYQKMVERRESIFCIQYNVRAFMNVKHWPWMKLYFKIKPLLKSAETEKEMANMKEEFEKTKEELAKTEAKRKELEEKMVTLMQEKNDLQLQVQAEADSLADAEERCDQLIKTKIQLEAKIKEVTERAEDEEEINAELTAKKRKLEDECSELKKDIDDLELTLAKVEKEKHATENKVKNLTEEMAGLDETIAKLTKEKKALQEAHQQTLDDLQAEEDKVNTLTKAKIKLEQQVDDLEGSLEQEKKIRMDLERAKRKLEGDLKLAQESTMDIENDKQQLDEKLKKKEFEMSGLQSKIEDEQALGMQLQKKIKELQARIEELEEEIEAERASRAKAEKQRSDLSRELEEISERLEEAGGATSAQIEMNKKREAEFQKMRRDLEEATLQHEATAATLRKKHADSVAELGEQIDNLQRVKQKLEKEKSEMKMEIDDLASNMETVSKAKGNLEKMCRALEDQLSEIKTKEEEQQRLINDLTAQRARLQTESGEYSRQLDEKDTLVSQLSRGKQAFTQQIEELKRQLEEEIKAKSALAHALQSSRHDCDLLREQYEEEQEAKAELQRAMSKANSEVAQWRTKYETDAIQRTEELEEAKKKLAQRLQDAEEHVEAVNAKCASLEKTKQRLQNEVEDLMIDVERTNAACAALDKKQRNFDKILAEWKQKCEETHAELEASQKESRSLSTELFKIKNAYEESLDQLETLKRENKNLQQEISDLTEQIAEGGKRIHELEKIKKQVEQEKSELQAALEEAEASLEHEEGKILRIQLELNQVKSEVDRKIAEKDEEIDQMKRNHIRIVESMQSTLDAEIRSRNDAIRLKKKMEGDLNEMEIQLNHANRMAAEALRNYRNTQAILKDTQLHLDDALRSQEDLKEQLAMVERRANLLQAEIEELRATLEQTERSRKIAEQELLDASERVQLLHTQNTSLINTKKKLETDISQIQGEMEDIIQEARNAEEKAKKAITDAAMMAEELKKEQDTSAHLERMKKNLEQTVKDLQHRLDEAEQLALKGGKKQIQKLEARVRELEGEVESEQKRNVEAVKGLRKHERKVKELTYQTEEDRKNILRLQDLVDKLQAKVKSYKRQAEEAEEQSNVNLSKFRRIQHELEEAEERADIAESQVNKLRVKSREVHTKIISEE.

The Myosin N-terminal SH3-like domain occupies 33–82 (DAKTSVFVVDPKESFVKATVQSREGGKVTAKTEAGATVTVKDDQVFPMNP). 2 positions are modified to phosphothreonine: T64 and T69. Residues 86–782 (DKIEDMAMMT…LLGLLEEMRD (697 aa)) form the Myosin motor domain. At K130 the chain carries N6,N6,N6-trimethyllysine. Residue 179-186 (GESGAGKT) coordinates ATP. Position 389 is a phosphotyrosine (Y389). T419 is modified (phosphothreonine). Residue Y424 is modified to Phosphotyrosine. Residues 659–681 (LNKLMTNLRSTHPHFVRCIIPNE) are actin-binding. Pros-methylhistidine is present on H757. The segment at 761–775 (KFGHTKVFFKAGLLG) is actin-binding. In terms of domain architecture, IQ spans 785–814 (LAQLITRTQAMCRGFLARVEYQKMVERRES). A coiled-coil region spans residues 843–1939 (LLKSAETEKE…EVHTKIISEE (1097 aa)). Residues S1092, S1096, S1162, and S1237 each carry the phosphoserine modification. T1241 bears the Phosphothreonine mark. Residues S1243 and S1261 each carry the phosphoserine modification. A phosphothreonine mark is found at T1265 and T1286. Residues S1288, S1292, S1303, and S1306 each carry the phosphoserine modification. At T1467 the chain carries Phosphothreonine. The residue at position 1474 (S1474) is a Phosphoserine. A Phosphotyrosine modification is found at Y1492. S1495 is subject to Phosphoserine. A Phosphothreonine modification is found at T1501. S1514 carries the phosphoserine modification. At T1517 the chain carries Phosphothreonine. A phosphoserine mark is found at S1542, S1554, S1574, S1600, S1603, S1714, and S1726. Phosphothreonine is present on residues T1730 and T1736. Position 1739 is a phosphoserine (S1739).

It belongs to the TRAFAC class myosin-kinesin ATPase superfamily. Myosin family. Muscle myosin is a hexameric protein that consists of 2 heavy chain subunits (MHC), 2 alkali light chain subunits (MLC) and 2 regulatory light chain subunits (MLC-2). Interacts with SLC26A5.

The protein resides in the cytoplasm. Its subcellular location is the myofibril. Functionally, required for normal hearing. It plays a role in cochlear amplification of auditory stimuli, likely through the positive regulation of prestin (SLC26A5) activity and outer hair cell (OHC) electromotility. In Homo sapiens (Human), this protein is Myosin-1.